Consider the following 589-residue polypeptide: NADPH-dependent diflavin oxidoreductase 1 (589 aa).

One can recognise a Flavodoxin-like domain in the interval 5–151; it reads ITILYGSETG…YYIEWEAELI (147 aa). FMN is bound by residues 11–16, 60–63, 98–107, and Glu133; these read SETGNA, STTG, and VGDSSYVKYN. The FAD-binding FR-type domain occupies 202 to 439; sequence DGLKLGTVLE…SIQRSSFKYK (238 aa). Residues Arg349, 380 to 383, and 412 to 415 contribute to the FAD site; these read RMFS and GVCT. Residues Thr452 and 507-508 contribute to the NADP(+) site; that span reads SR. Trp589 contacts FAD.

This sequence belongs to the NADPH-dependent diflavin oxidoreductase NDOR1 family. It in the N-terminal section; belongs to the flavodoxin family. The protein in the C-terminal section; belongs to the flavoprotein pyridine nucleotide cytochrome reductase family. In terms of assembly, interacts with DRE2; as part of the cytosolic iron-sulfur (Fe-S) protein assembly (CIA) machinery. FAD serves as cofactor. FMN is required as a cofactor.

It localises to the cytoplasm. Its subcellular location is the mitochondrion. The enzyme catalyses 2 oxidized [2Fe-2S]-[protein] + NADPH = 2 reduced [2Fe-2S]-[protein] + NADP(+) + H(+). Functionally, NADPH-dependent reductase which is a central component of the cytosolic iron-sulfur (Fe-S) protein assembly (CIA) machinery. Transfers electrons from NADPH via its FAD and FMN prosthetic groups to the [2Fe-2S] cluster of DRE2, another key component of the CIA machinery. In turn, this reduced cluster provides electrons for assembly of cytosolic iron-sulfur cluster proteins. Positively controls H(2)O(2)-induced cell death. The chain is NADPH-dependent diflavin oxidoreductase 1 from Candida albicans (strain SC5314 / ATCC MYA-2876) (Yeast).